A 331-amino-acid chain; its full sequence is D-alanine--D-alanine ligase (331 aa).

The region spanning 122–328 is the ATP-grasp domain; the sequence is KLWYDAIGIP…FHEFLADCIE (207 aa). ATP is bound at residue 152–207; it reads AFDKWGKLFVKAARQGSSVGCYSVTNIEQLSDAIDKAFGFSHQVLVEKAVKPRELE. 3 residues coordinate Mg(2+): Asp282, Glu295, and Asn297.

Belongs to the D-alanine--D-alanine ligase family. The cofactor is Mg(2+). It depends on Mn(2+) as a cofactor.

The protein localises to the cytoplasm. The catalysed reaction is 2 D-alanine + ATP = D-alanyl-D-alanine + ADP + phosphate + H(+). It participates in cell wall biogenesis; peptidoglycan biosynthesis. Functionally, cell wall formation. The polypeptide is D-alanine--D-alanine ligase (Vibrio vulnificus (strain YJ016)).